The following is a 355-amino-acid chain: Trans-enoyl reductase (355 aa).

45 to 48 contacts NADP(+); that stretch reads VDTK. 131 to 138 provides a ligand contact to substrate; that stretch reads ISFMTTGL. NADP(+) is bound by residues 166 to 169, 189 to 192, tyrosine 207, and 254 to 255; these read SSAT, SPRN, and LE. 275–279 serves as a coordination point for substrate; the sequence is GPQML. 344-345 provides a ligand contact to NADP(+); sequence IS.

This sequence belongs to the zinc-containing alcohol dehydrogenase family. As to quaternary structure, monomer.

It carries out the reaction L-serine + 7 malonyl-CoA + acetyl-CoA + 2 S-adenosyl-L-methionine + ATP + 8 NADPH + 11 H(+) = (5S)-3-[(2E,6R,8E,10E,12E)-2,6-dimethyltetradeca-2,8,10,12-tetraenoyl]-5-(hydroxymethyl)pyrrolidine-2,4-dione + AMP + 2 S-adenosyl-L-homocysteine + 7 CO2 + diphosphate + 8 NADP(+) + 8 CoA + 6 H2O. It functions in the pathway mycotoxin biosynthesis. Its function is as follows. Hybrid PKS-NRPS synthetase; part of the gene cluster that mediates the biosynthesis of trichosetin, a trans-fused decalin-containing tetramic acid with antimicrobial activity. The PKS module of PKS-NRPS1 together with the enoylreductase (ER) catalyze the formation of the polyketide unit which is then conjugated to L-serine by the condensation domain of the PKS-NRPS1 NRPS module. Activity of the Dieckmann cyclase domain (RED) results in release of the Dieckmann product intermediate. Diels-Alderase (DA) is involved in endo-selective Diels-Alder cycloaddition to form the decalin ring, leading to the production of N-desmethylequisetin also called trichosetin. The cluster does not contain the equisetin N-methyltransferase and consequently, trichosetin is isolated as final product. The chain is Trans-enoyl reductase from Gibberella fujikuroi (strain CBS 195.34 / IMI 58289 / NRRL A-6831) (Bakanae and foot rot disease fungus).